A 217-amino-acid chain; its full sequence is tRNA (guanine-N(7)-)-methyltransferase (217 aa).

Glu44, Asp69, Asp96, and Asp118 together coordinate S-adenosyl-L-methionine. The active site involves Asp118. Substrate is bound at residue Lys122. Residues 124–129 (RHEKRR) are interaction with RNA. Residues Asp154 and 193–196 (TEYE) contribute to the substrate site.

This sequence belongs to the class I-like SAM-binding methyltransferase superfamily. TrmB family.

It catalyses the reaction guanosine(46) in tRNA + S-adenosyl-L-methionine = N(7)-methylguanosine(46) in tRNA + S-adenosyl-L-homocysteine. Its pathway is tRNA modification; N(7)-methylguanine-tRNA biosynthesis. Functionally, catalyzes the formation of N(7)-methylguanine at position 46 (m7G46) in tRNA. In Lactococcus lactis subsp. lactis (strain IL1403) (Streptococcus lactis), this protein is tRNA (guanine-N(7)-)-methyltransferase.